Consider the following 214-residue polypeptide: uncharacterized protein (214 aa).

Transmembrane regions (helical) follow at residues 18–38 (LLLL…NTFV), 51–71 (DLAL…IVAG), 80–100 (ILVL…VLLV), 108–128 (LLVL…AFNV), and 145–165 (FFGV…GYII).

It is found in the cell membrane. This is an uncharacterized protein from Geobacillus stearothermophilus (Bacillus stearothermophilus).